Here is a 121-residue protein sequence, read N- to C-terminus: uncharacterized protein (121 aa).

Disordered stretches follow at residues 1-28 (MGCASAKHVATVQNEEEAQRGKSYQNGD) and 60-81 (QENLEKSASSNTRLKTNKEIPG). Residues Ser95 and Ser115 each carry the phosphoserine modification.

This is an uncharacterized protein from Mus musculus (Mouse).